Here is a 105-residue protein sequence, read N- to C-terminus: Cell division protein FtsL (105 aa).

Topologically, residues 1–22 (MIGNERHGLVGVIGADLIRNAK) are cytoplasmic. The helical transmembrane segment at 23 to 43 (IPLILLVAVLISAVLVVTTAH) threads the bilayer. Over 44–105 (RTRLLTAERE…DPSQENIVIK (62 aa)) the chain is Periplasmic.

Belongs to the FtsL family. As to quaternary structure, part of a complex composed of FtsB, FtsL and FtsQ.

It localises to the cell inner membrane. In terms of biological role, essential cell division protein. May link together the upstream cell division proteins, which are predominantly cytoplasmic, with the downstream cell division proteins, which are predominantly periplasmic. The chain is Cell division protein FtsL from Yersinia pestis.